The chain runs to 490 residues: Adenylosuccinate lyase (490 aa).

Ala2 bears the N-acetylalanine mark. Substrate is bound by residues 26–27 (RY), 91–93 (RHD), and 117–118 (TS). Position 153 is an N6-acetyllysine (Lys153). His165 functions as the Proton donor/acceptor in the catalytic mechanism. A substrate-binding site is contributed by Gln247. Catalysis depends on Ser295, which acts as the Proton donor/acceptor. Lys301 carries the N6-acetyllysine modification. Substrate contacts are provided by Arg309, Arg335, Ser340, and Arg344. A Glycyl lysine isopeptide (Lys-Gly) (interchain with G-Cter in SUMO1) cross-link involves residue Lys421.

It belongs to the lyase 1 family. Adenylosuccinate lyase subfamily. In terms of assembly, homotetramer. Residues from neighboring subunits contribute catalytic and substrate-binding residues to each active site.

The enzyme catalyses N(6)-(1,2-dicarboxyethyl)-AMP = fumarate + AMP. It carries out the reaction (2S)-2-[5-amino-1-(5-phospho-beta-D-ribosyl)imidazole-4-carboxamido]succinate = 5-amino-1-(5-phospho-beta-D-ribosyl)imidazole-4-carboxamide + fumarate. It participates in purine metabolism; AMP biosynthesis via de novo pathway; AMP from IMP: step 2/2. The protein operates within purine metabolism; IMP biosynthesis via de novo pathway; 5-amino-1-(5-phospho-D-ribosyl)imidazole-4-carboxamide from 5-amino-1-(5-phospho-D-ribosyl)imidazole-4-carboxylate: step 2/2. In terms of biological role, catalyzes two non-sequential steps in de novo AMP synthesis: converts (S)-2-(5-amino-1-(5-phospho-D-ribosyl)imidazole-4-carboxamido)succinate (SAICAR) to fumarate plus 5-amino-1-(5-phospho-D-ribosyl)imidazole-4-carboxamide, and thereby also contributes to de novo IMP synthesis, and converts succinyladenosine monophosphate (SAMP) to AMP and fumarate. The sequence is that of Adenylosuccinate lyase (ADSL) from Bos taurus (Bovine).